The sequence spans 313 residues: Protein sprouty homolog 2 (313 aa).

Over residues 1–14 (METRVQHGSGSQAL) the composition is skewed to polar residues. 2 disordered regions span residues 1 to 31 (METR…PDLR) and 54 to 146 (EYTE…VADG). 2 stretches are compositionally biased toward basic and acidic residues: residues 17 to 31 (ARRD…PDLR) and 78 to 89 (KSERPHGLPEHR). The span at 108-131 (SRSISTVSTGSRSSTRTSTSSNSS) shows a compositional bias: low complexity. The segment covering 132–141 (EQRLLGSSSG) has biased composition (polar residues). Residues 175 to 289 (RCEDCGKCKC…CYDRVNRPGC (115 aa)) enclose the SPR domain.

The protein belongs to the sprouty family. As to expression, brain and interlimb region.

The protein resides in the cytoplasm. Its subcellular location is the membrane. Functionally, acts as an antagonist of FGF-induced retinal lens fiber differentiation. Inhibits TGFB-induced epithelial-to-mesenchymal transition in retinal lens epithelial cells. May play an important role in FGF-mediated patterning of the mid/hindbrain region by acting to modulate the signaling effects of FGF8. The polypeptide is Protein sprouty homolog 2 (SPRY2) (Gallus gallus (Chicken)).